A 253-amino-acid chain; its full sequence is Putative glutamine amidotransferase PB2B2.05 (253 aa).

Residues 5 to 228 (IIALSVGFSN…INRSKWHMKQ (224 aa)) enclose the Glutamine amidotransferase type-1 domain. Residue Cys-100 is the Nucleophile of the active site. Catalysis depends on residues His-200 and Glu-202.

Its subcellular location is the cytoplasm. It localises to the nucleus. The sequence is that of Putative glutamine amidotransferase PB2B2.05 from Schizosaccharomyces pombe (strain 972 / ATCC 24843) (Fission yeast).